Here is a 229-residue protein sequence, read N- to C-terminus: Ribonuclease 3 (229 aa).

Residues 7-132 (LKAFEGRIGH…VIAAVYLDAG (126 aa)) enclose the RNase III domain. Mg(2+) is bound at residue E45. Residue D49 is part of the active site. The Mg(2+) site is built by D118 and E121. E121 is an active-site residue. The DRBM domain maps to 157-226 (DAKTALQEWA…ARALLARMEA (70 aa)).

Belongs to the ribonuclease III family. As to quaternary structure, homodimer. It depends on Mg(2+) as a cofactor.

The protein localises to the cytoplasm. It catalyses the reaction Endonucleolytic cleavage to 5'-phosphomonoester.. Its function is as follows. Digests double-stranded RNA. Involved in the processing of primary rRNA transcript to yield the immediate precursors to the large and small rRNAs (23S and 16S). Processes some mRNAs, and tRNAs when they are encoded in the rRNA operon. Processes pre-crRNA and tracrRNA of type II CRISPR loci if present in the organism. This is Ribonuclease 3 from Cereibacter sphaeroides (strain ATCC 17029 / ATH 2.4.9) (Rhodobacter sphaeroides).